We begin with the raw amino-acid sequence, 72 residues long: Mitotic-spindle organizing protein 1 (72 aa).

Belongs to the MOZART1 family. Part of the gamma-tubulin complex.

The protein localises to the cytoplasm. It is found in the cytoskeleton. Its subcellular location is the microtubule organizing center. It localises to the spindle pole body. Its function is as follows. Required for gamma-tubulin complex recruitment to the microtubule organizing center (MTOC). The protein is Mitotic-spindle organizing protein 1 of Coccidioides immitis (strain RS) (Valley fever fungus).